The following is a 388-amino-acid chain: Succinate--CoA ligase [ADP-forming] subunit beta (388 aa).

The 236-residue stretch at 9-244 (KQLFKEYGLP…PSQEDAREAH (236 aa)) folds into the ATP-grasp domain. Residues K46, 53–55 (GRG), E99, T102, and E107 contribute to the ATP site. Positions 199 and 213 each coordinate Mg(2+). Substrate contacts are provided by residues N264 and 321–323 (GIV).

It belongs to the succinate/malate CoA ligase beta subunit family. Heterotetramer of two alpha and two beta subunits. The cofactor is Mg(2+).

It carries out the reaction succinate + ATP + CoA = succinyl-CoA + ADP + phosphate. It catalyses the reaction GTP + succinate + CoA = succinyl-CoA + GDP + phosphate. It functions in the pathway carbohydrate metabolism; tricarboxylic acid cycle; succinate from succinyl-CoA (ligase route): step 1/1. In terms of biological role, succinyl-CoA synthetase functions in the citric acid cycle (TCA), coupling the hydrolysis of succinyl-CoA to the synthesis of either ATP or GTP and thus represents the only step of substrate-level phosphorylation in the TCA. The beta subunit provides nucleotide specificity of the enzyme and binds the substrate succinate, while the binding sites for coenzyme A and phosphate are found in the alpha subunit. The protein is Succinate--CoA ligase [ADP-forming] subunit beta of Alteromonas mediterranea (strain DSM 17117 / CIP 110805 / LMG 28347 / Deep ecotype).